We begin with the raw amino-acid sequence, 339 residues long: Ketol-acid reductoisomerase (NADP(+)) (339 aa).

The KARI N-terminal Rossmann domain occupies 1-182 (MKVYYDSDAD…GGGRSGVIET (182 aa)). NADP(+) is bound by residues 24-27 (YGSQ), Arg48, Ser51, Ser53, and 83-86 (DEHQ). Residue His108 is part of the active site. Gly134 contributes to the NADP(+) binding site. The region spanning 183-328 (TFREEVETDL…ARLRKMMPWI (146 aa)) is the KARI C-terminal knotted domain. The Mg(2+) site is built by Asp191, Glu195, Glu227, and Glu231. A substrate-binding site is contributed by Ser252.

The protein belongs to the ketol-acid reductoisomerase family. The cofactor is Mg(2+).

It carries out the reaction (2R)-2,3-dihydroxy-3-methylbutanoate + NADP(+) = (2S)-2-acetolactate + NADPH + H(+). It catalyses the reaction (2R,3R)-2,3-dihydroxy-3-methylpentanoate + NADP(+) = (S)-2-ethyl-2-hydroxy-3-oxobutanoate + NADPH + H(+). The protein operates within amino-acid biosynthesis; L-isoleucine biosynthesis; L-isoleucine from 2-oxobutanoate: step 2/4. Its pathway is amino-acid biosynthesis; L-valine biosynthesis; L-valine from pyruvate: step 2/4. Involved in the biosynthesis of branched-chain amino acids (BCAA). Catalyzes an alkyl-migration followed by a ketol-acid reduction of (S)-2-acetolactate (S2AL) to yield (R)-2,3-dihydroxy-isovalerate. In the isomerase reaction, S2AL is rearranged via a Mg-dependent methyl migration to produce 3-hydroxy-3-methyl-2-ketobutyrate (HMKB). In the reductase reaction, this 2-ketoacid undergoes a metal-dependent reduction by NADPH to yield (R)-2,3-dihydroxy-isovalerate. This is Ketol-acid reductoisomerase (NADP(+)) from Zymomonas mobilis subsp. mobilis (strain ATCC 31821 / ZM4 / CP4).